Reading from the N-terminus, the 363-residue chain is Putative F-box protein At4g22170 (363 aa).

The F-box domain occupies 7 to 58 (PNSWSDLPHDLLNLVFERLSFANFNRARSVCSSWYSASRQSVPKNQIHWLIL).

In Arabidopsis thaliana (Mouse-ear cress), this protein is Putative F-box protein At4g22170.